Consider the following 213-residue polypeptide: Ribosomal RNA small subunit methyltransferase G (213 aa).

S-adenosyl-L-methionine contacts are provided by residues Gly-72, Phe-77, 125 to 126 (IE), and Arg-141.

The protein belongs to the methyltransferase superfamily. RNA methyltransferase RsmG family.

The protein localises to the cytoplasm. The catalysed reaction is guanosine(527) in 16S rRNA + S-adenosyl-L-methionine = N(7)-methylguanosine(527) in 16S rRNA + S-adenosyl-L-homocysteine. Specifically methylates the N7 position of guanine in position 527 of 16S rRNA. The polypeptide is Ribosomal RNA small subunit methyltransferase G (Sinorhizobium medicae (strain WSM419) (Ensifer medicae)).